Consider the following 99-residue polypeptide: Aspartyl/glutamyl-tRNA(Asn/Gln) amidotransferase subunit C (99 aa).

The protein belongs to the GatC family. Heterotrimer of A, B and C subunits.

The catalysed reaction is L-glutamyl-tRNA(Gln) + L-glutamine + ATP + H2O = L-glutaminyl-tRNA(Gln) + L-glutamate + ADP + phosphate + H(+). It catalyses the reaction L-aspartyl-tRNA(Asn) + L-glutamine + ATP + H2O = L-asparaginyl-tRNA(Asn) + L-glutamate + ADP + phosphate + 2 H(+). Its function is as follows. Allows the formation of correctly charged Asn-tRNA(Asn) or Gln-tRNA(Gln) through the transamidation of misacylated Asp-tRNA(Asn) or Glu-tRNA(Gln) in organisms which lack either or both of asparaginyl-tRNA or glutaminyl-tRNA synthetases. The reaction takes place in the presence of glutamine and ATP through an activated phospho-Asp-tRNA(Asn) or phospho-Glu-tRNA(Gln). The chain is Aspartyl/glutamyl-tRNA(Asn/Gln) amidotransferase subunit C from Leptothrix cholodnii (strain ATCC 51168 / LMG 8142 / SP-6) (Leptothrix discophora (strain SP-6)).